The primary structure comprises 368 residues: MNSGPLEFTVSANTNPATDAVRESILANPGFGKYYTDHMVSIDYTVDEGWHNAQVIPYGPIQLDPSAIVLHYGQEIFEGLKAYRWADGSIVSFRPEANAARLQSSARRLAIPELPEEVFIESLRQLIAVDEKWVPPAGGEESLYLRPFVIATEPGLGVRPSNEYRYLLIASPAGAYFKGGIKPVSVWLSHEYVRASPGGTGAAKFGGNYAASLLAQAQAAEMGCDQVVWLDAIERRYVEEMGGMNLFFVFGSGGSARLVTPELSGSLLPGITRDSLLQLATDAGFAVEERKIDVDEWQKKAGAGEITEVFACGTAAVITPVSHVKHHDGEFTIADGQPGEITMALRDTLTGIQRGTFADTHGWMARLN.

Residue R101 participates in pyridoxal 5'-phosphate binding. N6-(pyridoxal phosphate)lysine is present on K204. Pyridoxal 5'-phosphate is bound by residues Y209 and 271–272 (IT). K299 is covalently cross-linked (Isoglutamyl lysine isopeptide (Lys-Gln) (interchain with Q-Cter in protein Pup)). Residue T314 participates in pyridoxal 5'-phosphate binding.

Belongs to the class-IV pyridoxal-phosphate-dependent aminotransferase family. In terms of assembly, homodimer. The cofactor is pyridoxal 5'-phosphate.

It catalyses the reaction L-isoleucine + 2-oxoglutarate = (S)-3-methyl-2-oxopentanoate + L-glutamate. The enzyme catalyses L-valine + 2-oxoglutarate = 3-methyl-2-oxobutanoate + L-glutamate. The catalysed reaction is L-leucine + 2-oxoglutarate = 4-methyl-2-oxopentanoate + L-glutamate. It participates in amino-acid biosynthesis; L-isoleucine biosynthesis; L-isoleucine from 2-oxobutanoate: step 4/4. It functions in the pathway amino-acid biosynthesis; L-leucine biosynthesis; L-leucine from 3-methyl-2-oxobutanoate: step 4/4. The protein operates within amino-acid biosynthesis; L-valine biosynthesis; L-valine from pyruvate: step 4/4. Inhibited by ammonium sulfate at millimolar concentrations and by O-benzylhydroxylamine (Obe). In terms of biological role, catalyzes the reversible transfers of an amino group from glutamate to the alpha-ketoacid of the respective amino acid in the final step in the biosynthesis of branchedchain amino acids. The amino acids can be ranked in the following order with respect to their efficiency as amino donor: Leu &gt; Ile &gt; Val. In Mycolicibacterium smegmatis (strain ATCC 700084 / mc(2)155) (Mycobacterium smegmatis), this protein is Branched-chain-amino-acid aminotransferase (ilvE).